The chain runs to 215 residues: E3 ubiquitin-protein ligase znrf1 (215 aa).

2 disordered regions span residues 1–39 (MGGKQSTAGRPRGAFPGVSTDDSAVPPSAHFGHYRPGGT) and 66–96 (YTPRGTDSDRAGGGSGSDPAHNGNGYQETGG). G2 carries N-myristoyl glycine lipidation. Residues 172-213 (CVICLEELQQGDTIARLPCLCIYHKSCIDSWFEINRSCPEHP) form an RING-type; atypical zinc finger.

It is found in the endosome. The protein localises to the lysosome. The protein resides in the membrane. It catalyses the reaction S-ubiquitinyl-[E2 ubiquitin-conjugating enzyme]-L-cysteine + [acceptor protein]-L-lysine = [E2 ubiquitin-conjugating enzyme]-L-cysteine + N(6)-ubiquitinyl-[acceptor protein]-L-lysine.. The protein operates within protein modification; protein ubiquitination. In terms of biological role, E3 ubiquitin-protein ligase that plays a role in neuron cells differentiation. Plays a role in the establishment and maintenance of neuronal transmission and plasticity. The sequence is that of E3 ubiquitin-protein ligase znrf1 (znrf1) from Danio rerio (Zebrafish).